Here is an 863-residue protein sequence, read N- to C-terminus: Dipeptidyl peptidase 9 (863 aa).

Positions 1–20 (MATTGTPTADRGDAAATDDP) are disordered. Position 2 is an N-acetylalanine (A2). Active-site charge relay system residues include S730, D808, and H840. Val-boroPro is bound at residue S730.

It belongs to the peptidase S9B family. DPPIV subfamily. In terms of assembly, homodimer. Forms a ternary complex with NLRP1, composed of a DPP9 homodimer, one full-length NLRP1 protein, and one cleaved C-terminus of NLRP1 (NACHT, LRR and PYD domains-containing protein 1, C-terminus). Forms a ternary complex with CARD8, composed of a DPP9 homodimer, one full-length NLRP1 protein, and one cleaved C-terminus of CARD8 (Caspase recruitment domain-containing protein 8, C-terminus). In the ternary complex, only one subunit of the DPP9 homodimer is bound to NLRP1 or CARD8. As to expression, ubiquitously expressed, with highest levels in liver, heart and muscle, and lowest levels in brain.

The protein resides in the cytoplasm. It localises to the cytosol. It is found in the nucleus. It catalyses the reaction Release of an N-terminal dipeptide, Xaa-Yaa-|-Zaa-, from a polypeptide, preferentially when Yaa is Pro, provided Zaa is neither Pro nor hydroxyproline.. Its activity is regulated as follows. Inhibited by the serine proteinase inhibitor 4-(2-aminoethyl)benzenesulphonyl fluoride (AEBSF), and by di-isopropylfluorophosphate. Inhibited by Val-boroPro (Talabostat, PT-100), a non-selective inhibitor, which triggers pyroptosis in monocytes and macrophages. Val-boroPro inhibits activity by binding to the active site, mimicking a substrate-bound state, thereby displacing the C-terminal fragment of NLRP1, leading to activation of the NLRP1 inflammasome. In contrast, Val-boroPro does not directly displaces CARD8: it acts by promoting degradation of the N-terminal part of CARD8, leading to indirect disruption of the ternary complex. Chemical inhibition of DPP9 by Val-boroPro in HIV-1-infected cells activates the CARD8 inflammasome, triggering cell death, offering a promising strategy for the elimination of HIV-1 reservoirs in people living with HIV-1. In terms of biological role, dipeptidyl peptidase that cleaves off N-terminal dipeptides from proteins having a Pro or Ala residue at position 2. Acts as a key inhibitor of caspase-1-dependent monocyte and macrophage pyroptosis in resting cells by preventing activation of NLRP1 and CARD8. Sequesters the cleaved C-terminal part of NLRP1 and CARD8, which respectively constitute the active part of the NLRP1 and CARD8 inflammasomes, in a ternary complex, thereby preventing their oligomerization and activation. The dipeptidyl peptidase activity is required to suppress NLRP1 and CARD8; however, neither NLRP1 nor CARD8 are bona fide substrates of DPP9, suggesting the existence of substrate(s) required for NLRP1 and CARD8 inhibition. This Homo sapiens (Human) protein is Dipeptidyl peptidase 9.